A 503-amino-acid polypeptide reads, in one-letter code: MSYPGYPPPPGGYPPAPGGGAWGGAGYPPPSMPPIGLDNVANYAGQFNQDYLSGMAANMSGTFGGANVPPNLYPGAPGGGYPPVPPGGFGQPPPTQPSVPPYGVYPPPGGNPPSGVPSYPPFPGAPVPGQPMPPPGHQPPGPYPGQLPVTYPGQSPVPPPGQQPMPSYPGYPGSGTVTPAVPPVQFGNRGTITDASGFDPLRDAEVLRKAMKGFGTDEQAIIDCLGSRSNKQRQQILLSFKTAYGKDLIKDLKSELSGNFEKTILALMKTPILFDAYEIKEAIKGAGTDEACLIEILASRSNEHIRELNKAYKTEFKKTLEEAIRSDTSGHFQRLLISLSQGNRDESTNVDMSLVQRDVQELYAAGENRLGTDESKFNAVLCSRSRAHLVAVFNEYQRMTGRDIEKSICREMSGDLEQGMLAVVKCLKNTPAFFAERLNRAMRGAGTKDRTLIRIMVSRSEIDLLDIRAEYKRMYGKSLYHDISGDTSGDYRKILLKICGGND.

3 stretches are compositionally biased toward pro residues: residues 1 to 17, 80 to 145, and 155 to 169; these read MSYPGYPPPPGGYPPAP, GYPP…PYPG, and SPVPPPGQQPMPSYP. Disordered stretches follow at residues 1–35 and 56–178; these read MSYPGYPPPPGGYPPAPGGGAWGGAGYPPPSMPPI and AANM…GTVT. Annexin repeat units follow at residues 198–269, 270–341, 353–425, and 429–500; these read FDPL…ALMK, TPIL…SLSQ, SLVQ…AVVK, and NTPA…KICG. N6-acetyllysine occurs at positions 246 and 253. Lys-477 is subject to N6-acetyllysine.

It belongs to the annexin family. As to quaternary structure, interacts with PDCD6 in a calcium-dependent manner. Interacts with KIF23 during cytokinesis. Interacts with S100A6.

It localises to the cytoplasm. The protein localises to the melanosome. The protein resides in the nucleus envelope. It is found in the nucleus. Its subcellular location is the nucleoplasm. It localises to the cytoskeleton. The protein localises to the spindle. Required for midbody formation and completion of the terminal phase of cytokinesis. Binds specifically to calcyclin in a calcium-dependent manner. This chain is Annexin A11 (ANXA11), found in Oryctolagus cuniculus (Rabbit).